The primary structure comprises 1176 residues: Leucine--tRNA ligase, cytoplasmic (1176 aa).

L-leucine contacts are provided by Y52 and Y54. Positions 60-63 (HLGH) match the 'HIGH' region motif. At S167 the chain carries Phosphoserine. Residues 260–509 (GPQEYTLLKL…DAGDALIYME (250 aa)) form an editing domain region. L-leucine contacts are provided by L594 and S597. The short motif at 716-720 (KMSKS) is the 'KMSKS' region element. An ATP-binding site is contributed by K719. Position 720 is a phosphoserine (S720). N6-acetyllysine is present on residues K970 and K1047.

Belongs to the class-I aminoacyl-tRNA synthetase family. In terms of assembly, part of the aminoacyl-tRNA synthetase multienzyme complex, also known as multisynthetase complex (MSC), that is composed of the aminoacyl-tRNA ligases for Arg (RARS1), Asp (DARS1), Gln (QARS1), Ile (IARS1), Leu (LARS1), Lys (KARS1), Met (MARS1) the bifunctional ligase for Glu and Pro (EPRS1) and the auxiliary subunits AIMP1/p43, AIMP2/p38 and EEF1E1/p18.

The protein resides in the cytoplasm. It carries out the reaction tRNA(Leu) + L-leucine + ATP = L-leucyl-tRNA(Leu) + AMP + diphosphate. It catalyses the reaction L-methionyl-tRNA(Leu) + H2O = tRNA(Leu) + L-methionine + H(+). 5-fluoro-1,3-dihydro-1-hydroxy-1,2-benzoxaborole inhibits LARS1 by forming a covalent adduct with the 3' adenosine of tRNA(Leu) at the editing site, thus locking the enzyme in an inactive conformation. Its function is as follows. Aminoacyl-tRNA synthetase that catalyzes the specific attachment of leucine to its cognate tRNA (tRNA(Leu)). It performs tRNA aminoacylation in a two-step reaction: Leu is initially activated by ATP to form a leucyl-adenylate (Leu-AMP) intermediate; then the leucyl moiety is transferred to the acceptor 3' end of the tRNA to yield leucyl-tRNA. To improve the fidelity of catalytic reactions, it is also able to hydrolyze misactivated aminoacyl-adenylate intermediates (pre-transfer editing) and mischarged aminoacyl-tRNAs (post-transfer editing). The chain is Leucine--tRNA ligase, cytoplasmic from Homo sapiens (Human).